The chain runs to 284 residues: Phosphatidylglycerol--prolipoprotein diacylglyceryl transferase (284 aa).

7 helical membrane passes run 18 to 38, 62 to 82, 106 to 126, 136 to 156, 190 to 210, 218 to 238, and 252 to 272; these read LGGI…VIAF, YFLW…VLIY, FVGI…IASY, LLIY…FGRI, PSQL…VLWA, GLLI…AEFY, and LSMG…ILLY. A 1,2-diacyl-sn-glycero-3-phospho-(1'-sn-glycerol) is bound at residue Arg155.

The protein belongs to the Lgt family.

It is found in the cell inner membrane. The enzyme catalyses L-cysteinyl-[prolipoprotein] + a 1,2-diacyl-sn-glycero-3-phospho-(1'-sn-glycerol) = an S-1,2-diacyl-sn-glyceryl-L-cysteinyl-[prolipoprotein] + sn-glycerol 1-phosphate + H(+). It functions in the pathway protein modification; lipoprotein biosynthesis (diacylglyceryl transfer). Catalyzes the transfer of the diacylglyceryl group from phosphatidylglycerol to the sulfhydryl group of the N-terminal cysteine of a prolipoprotein, the first step in the formation of mature lipoproteins. This Helicobacter pylori (strain G27) protein is Phosphatidylglycerol--prolipoprotein diacylglyceryl transferase.